The sequence spans 342 residues: uncharacterized protein (342 aa).

10 helical membrane passes run 8–28, 39–59, 79–99, 108–128, 142–162, 175–195, 207–227, 242–262, 276–296, and 304–324; these read FESS…TSLF, ISFL…MLWI, SSFS…FILI, IFWV…PFYM, GWYI…LIMP, INYF…AVVI, AMAP…VALI, FYIF…MAII, AMSW…THLV, and IVDY…IVTL.

This sequence belongs to the tellurite-resistance/dicarboxylate transporter (TDT) family.

The protein localises to the cell membrane. This is an uncharacterized protein from Methanocaldococcus jannaschii (strain ATCC 43067 / DSM 2661 / JAL-1 / JCM 10045 / NBRC 100440) (Methanococcus jannaschii).